The chain runs to 400 residues: Signal recognition particle receptor FtsY (400 aa).

Disordered stretches follow at residues 12-37 (TKKT…QEEQ) and 51-86 (NKIK…KDKK). Positions 51–72 (NKIKKTKTSETKKQEKPIETLK) are enriched in basic and acidic residues. Residues 192–199 (GVNGTGKT), 278–282 (DTAGR), and 342–345 (TKMD) each bind GTP.

Belongs to the GTP-binding SRP family. FtsY subfamily. As to quaternary structure, part of the signal recognition particle protein translocation system, which is composed of SRP and FtsY.

It is found in the cell membrane. The protein resides in the cytoplasm. It carries out the reaction GTP + H2O = GDP + phosphate + H(+). Its function is as follows. Involved in targeting and insertion of nascent membrane proteins into the cytoplasmic membrane. Acts as a receptor for the complex formed by the signal recognition particle (SRP) and the ribosome-nascent chain (RNC). The sequence is that of Signal recognition particle receptor FtsY from Mycoplasma mycoides subsp. mycoides SC (strain CCUG 32753 / NCTC 10114 / PG1).